The sequence spans 256 residues: Zinc import ATP-binding protein ZnuC 1 (256 aa).

The region spanning 5–220 (LTLQDVCVVF…PKYIALFGQQ (216 aa)) is the ABC transporter domain. 37–44 (GPNGAGKS) serves as a coordination point for ATP. Positions 232 to 256 (HHHNHDLSGEPSDGSCCSKNKKAHQ) are disordered.

The protein belongs to the ABC transporter superfamily. Zinc importer (TC 3.A.1.15.5) family. As to quaternary structure, the complex is composed of two ATP-binding proteins (ZnuC), two transmembrane proteins (ZnuB) and a solute-binding protein (ZnuA).

The protein localises to the cell inner membrane. The catalysed reaction is Zn(2+)(out) + ATP(in) + H2O(in) = Zn(2+)(in) + ADP(in) + phosphate(in) + H(+)(in). In terms of biological role, part of the ABC transporter complex ZnuABC involved in zinc import. Responsible for energy coupling to the transport system. The sequence is that of Zinc import ATP-binding protein ZnuC 1 from Aliivibrio fischeri (strain ATCC 700601 / ES114) (Vibrio fischeri).